Consider the following 166-residue polypeptide: Cyclic pyranopterin monophosphate synthase (166 aa).

Substrate-binding positions include 83–85 (LCH) and 121–122 (ME). The active site involves Asp-136.

This sequence belongs to the MoaC family. As to quaternary structure, homohexamer; trimer of dimers.

It catalyses the reaction (8S)-3',8-cyclo-7,8-dihydroguanosine 5'-triphosphate = cyclic pyranopterin phosphate + diphosphate. Its pathway is cofactor biosynthesis; molybdopterin biosynthesis. Catalyzes the conversion of (8S)-3',8-cyclo-7,8-dihydroguanosine 5'-triphosphate to cyclic pyranopterin monophosphate (cPMP). The chain is Cyclic pyranopterin monophosphate synthase from Trichodesmium erythraeum (strain IMS101).